A 465-amino-acid chain; its full sequence is Ribosomal oxygenase 2 (465 aa).

Residues 139 to 271 (QPQRFKDELW…NSWGDFLLDT (133 aa)) enclose the JmjC domain. Residues His-179, Asp-181, and His-240 each coordinate Fe cation. Ser-309 carries the phosphoserine modification.

The protein belongs to the ROX family. MINA53 subfamily. It depends on Fe(2+) as a cofactor.

The protein localises to the nucleus. The protein resides in the nucleolus. It catalyses the reaction L-histidyl-[ribosomal protein uL15] + 2-oxoglutarate + O2 = (3S)-3-hydroxy-L-histidyl-[ribosomal protein uL15] + succinate + CO2. The catalysed reaction is L-histidyl-[protein] + 2-oxoglutarate + O2 = (3S)-3-hydroxy-L-histidyl-[protein] + succinate + CO2. Functionally, oxygenase that can act as both a histone lysine demethylase and a ribosomal histidine hydroxylase. Is involved in the demethylation of trimethylated 'Lys-9' on histone H3 (H3K9me3), leading to an increase in ribosomal RNA expression. Also catalyzes the hydroxylation of 60S ribosomal protein L27a on 'His-39'. May play an important role in cell growth and survival. May be involved in ribosome biogenesis, most likely during the assembly process of pre-ribosomal particles. This is Ribosomal oxygenase 2 (RIOX2) from Pongo abelii (Sumatran orangutan).